Reading from the N-terminus, the 375-residue chain is MAQLCVALVAGEASGDILGSGLMRALKARHPDVRFIGVGGPLMEAEGLQSYFPMERLAVMGLVEVLGRLRELLKRRKLLIQTLIEEKPDVFIGIDAPDFTLNIELKLRQAGIKTVHYVSPSVWAWRQKRVLKIREGCDLMLTLLPFEARFYEEQGVPVRFVGHPLADTIPLEADRPAARAALGLGEGPVVALMPGSRGGEVGRLGALFLDAAERLCQQVPGVRFVLPCANATRRAQIEQMLEGRQLPLTLLDGQSHQALAACDAVLIASGTATLEALLYKRPMVVAYRLAPLTFWILKRLVKSPYVSLPNLLAQRELVPELLQDDATSEALANTLAPLVRDGSQQTERFDEIHRTLRRDASNQAAEAVLALLKDR.

Belongs to the LpxB family.

The catalysed reaction is a lipid X + a UDP-2-N,3-O-bis[(3R)-3-hydroxyacyl]-alpha-D-glucosamine = a lipid A disaccharide + UDP + H(+). It functions in the pathway bacterial outer membrane biogenesis; LPS lipid A biosynthesis. Functionally, condensation of UDP-2,3-diacylglucosamine and 2,3-diacylglucosamine-1-phosphate to form lipid A disaccharide, a precursor of lipid A, a phosphorylated glycolipid that anchors the lipopolysaccharide to the outer membrane of the cell. The protein is Lipid-A-disaccharide synthase of Pseudomonas putida (strain ATCC 700007 / DSM 6899 / JCM 31910 / BCRC 17059 / LMG 24140 / F1).